A 532-amino-acid chain; its full sequence is MEVQRNFFIFAFLFVSFLLWQAWQSQMFLNKKTNEKIDPIFHFIDVKKNKKKIFIKNDVISLVVNMYGGDVEEASLLAYKDTLYSSRPFKLLETGSDFIYQAQSGLIGKDGPDSSINDSRPLYSANKNFFVLGPNEKELRVPIKWVSKNGVIYKKTFILKPNRYDVQIEYDVYNPSKESLNMNIFGQIKQTINLPKKRNVYSGNFALQTFRGAAYSSDDNKYEKYKFDMIANNKNLHIMTESGWIAMLQQYFAVAWIPDNLGKNTIYTSSLDHDTAVIGYKSPIINIPPNSRSIIKSKLWIGPEIQKEMKLVAPNLDLTVDYGWLWFLSQPLFKLLTILYSIIGNWGFSIILITFIMRGLTYPLTKAQYISMAKMRALQPKIQEIKEKFSKDKQRISQEMILLYKKEKINPLGGFLPIFIQMPIFLSLYYMLIGSVELRHAPFLLWIHDLSSQDPYYVLPVIMGLTMFFIQKISSTNHISDPLQKKIMNFMPVIFTAFFLWFPSGLVLYYIISNLVTIIQQKFILSNLEKNR.

5 helical membrane passes run phenylalanine 7–methionine 27, leucine 336–isoleucine 356, glycine 413–isoleucine 433, leucine 450–isoleucine 470, and proline 492–isoleucine 512.

It belongs to the OXA1/ALB3/YidC family. Type 1 subfamily. Interacts with the Sec translocase complex via SecD. Specifically interacts with transmembrane segments of nascent integral membrane proteins during membrane integration.

It localises to the cell membrane. In terms of biological role, required for the insertion and/or proper folding and/or complex formation of integral membrane proteins into the membrane. Involved in integration of membrane proteins that insert both dependently and independently of the Sec translocase complex, as well as at least some lipoproteins. Aids folding of multispanning membrane proteins. In Buchnera aphidicola subsp. Acyrthosiphon pisum (strain 5A), this protein is Membrane protein insertase YidC.